A 457-amino-acid chain; its full sequence is Siroheme synthase 2 (457 aa).

A precorrin-2 dehydrogenase /sirohydrochlorin ferrochelatase region spans residues 1 to 204 (MDHLPIFCQL…DDRQAVADTT (204 aa)). NAD(+) contacts are provided by residues 22–23 (DV) and 43–44 (LD). Ser128 carries the phosphoserine modification. The tract at residues 216 to 457 (GEVVLVGAGP…RDKLNWFSNH (242 aa)) is uroporphyrinogen-III C-methyltransferase. S-adenosyl-L-methionine is bound at residue Pro225. The active-site Proton acceptor is Asp248. Lys270 serves as the catalytic Proton donor. S-adenosyl-L-methionine is bound by residues 301 to 303 (GGD), Ile306, 331 to 332 (TA), Met382, and Gly411.

It in the N-terminal section; belongs to the precorrin-2 dehydrogenase / sirohydrochlorin ferrochelatase family. The protein in the C-terminal section; belongs to the precorrin methyltransferase family.

The enzyme catalyses uroporphyrinogen III + 2 S-adenosyl-L-methionine = precorrin-2 + 2 S-adenosyl-L-homocysteine + H(+). It catalyses the reaction precorrin-2 + NAD(+) = sirohydrochlorin + NADH + 2 H(+). It carries out the reaction siroheme + 2 H(+) = sirohydrochlorin + Fe(2+). The protein operates within cofactor biosynthesis; adenosylcobalamin biosynthesis; precorrin-2 from uroporphyrinogen III: step 1/1. It participates in cofactor biosynthesis; adenosylcobalamin biosynthesis; sirohydrochlorin from precorrin-2: step 1/1. Its pathway is porphyrin-containing compound metabolism; siroheme biosynthesis; precorrin-2 from uroporphyrinogen III: step 1/1. It functions in the pathway porphyrin-containing compound metabolism; siroheme biosynthesis; siroheme from sirohydrochlorin: step 1/1. The protein operates within porphyrin-containing compound metabolism; siroheme biosynthesis; sirohydrochlorin from precorrin-2: step 1/1. Its function is as follows. Multifunctional enzyme that catalyzes the SAM-dependent methylations of uroporphyrinogen III at position C-2 and C-7 to form precorrin-2 via precorrin-1. Then it catalyzes the NAD-dependent ring dehydrogenation of precorrin-2 to yield sirohydrochlorin. Finally, it catalyzes the ferrochelation of sirohydrochlorin to yield siroheme. The sequence is that of Siroheme synthase 2 from Klebsiella pneumoniae subsp. pneumoniae (strain ATCC 700721 / MGH 78578).